Reading from the N-terminus, the 89-residue chain is Small ribosomal subunit protein uS15 (89 aa).

It belongs to the universal ribosomal protein uS15 family. In terms of assembly, part of the 30S ribosomal subunit. Forms a bridge to the 50S subunit in the 70S ribosome, contacting the 23S rRNA.

Its function is as follows. One of the primary rRNA binding proteins, it binds directly to 16S rRNA where it helps nucleate assembly of the platform of the 30S subunit by binding and bridging several RNA helices of the 16S rRNA. In terms of biological role, forms an intersubunit bridge (bridge B4) with the 23S rRNA of the 50S subunit in the ribosome. This is Small ribosomal subunit protein uS15 from Polynucleobacter asymbioticus (strain DSM 18221 / CIP 109841 / QLW-P1DMWA-1) (Polynucleobacter necessarius subsp. asymbioticus).